Here is a 473-residue protein sequence, read N- to C-terminus: PPE family protein PPE37 (473 aa).

Positions 203 to 206 match the Iron-binding motif motif; the sequence is DFLE. 2 helical membrane-spanning segments follow: residues 227-247 and 250-270; these read VLDW…AYLV and PLIY…PAGL.

The protein belongs to the mycobacterial PPE family.

Its subcellular location is the cell membrane. Essential for efficient heme-iron acquisition (HIA). Binds iron. Strains with a functional PPE37 can utilize low concentrations of hemin very efficiently in broth and on agar plates. During infection, might interfere with the pro-inflammatory cytokine response in infected macrophages. Functionally, in vitro, incubation of the protein in the presence of M.tuberculosis proteases leads to the cleavage of PPE37 into two segments, the N- and C-terminal segments. Transfection of human monocytic THP-1 cell lines with the N-terminal segment leads to the proliferation and differentiation of THP-1 cells into adherent stellate cells with dendritic cell-like morphology. Transfection of THP-1 cells with the C-terminal segment leads to the apoptosis of the cells. Recombinant protein antigens display strong B-cell response in tuberculosis patients and immunized mice. This Mycobacterium tuberculosis (strain ATCC 25618 / H37Rv) protein is PPE family protein PPE37.